Consider the following 98-residue polypeptide: Large ribosomal subunit protein uL23 (98 aa).

It belongs to the universal ribosomal protein uL23 family. In terms of assembly, part of the 50S ribosomal subunit. Contacts protein L29, and trigger factor when it is bound to the ribosome.

One of the early assembly proteins it binds 23S rRNA. One of the proteins that surrounds the polypeptide exit tunnel on the outside of the ribosome. Forms the main docking site for trigger factor binding to the ribosome. This is Large ribosomal subunit protein uL23 from Lactobacillus delbrueckii subsp. bulgaricus (strain ATCC 11842 / DSM 20081 / BCRC 10696 / JCM 1002 / NBRC 13953 / NCIMB 11778 / NCTC 12712 / WDCM 00102 / Lb 14).